The primary structure comprises 108 residues: Beta-defensin 126 (108 aa).

The signal sequence occupies residues 1 to 20 (MKSLLFTLAVFMLLAQLVSG). The tract at residues 21–63 (NWYVKKCLNDVGICKKKCKPGEMHIKNGWATCGKQRDCCVPAD) is in vitro binds to LPS, mediates antimicrobial activity and inhibits LPS-mediated inflammation. 3 disulfides stabilise this stretch: Cys-27/Cys-58, Cys-34/Cys-52, and Cys-38/Cys-59.

The protein belongs to the beta-defensin family. Homodimer or homooligomer; disulfide-linked. O-glycosylated; glycans contain alpha(2,3)-linked sialic acids.

It is found in the secreted. Functionally, highly glycosylated atypical beta-defensin involved in several aspects of sperm function. Facilitates sperm transport in the female reproductive tract and contributes to sperm protection against immunodetection; both functions are probably implicating the negative surface charge provided by its O-linked oligosaccharides in the sperm glycocalyx. Involved in binding of sperm to oviductal epithelial cells to form a sperm reservoir until ovulation. Release from the sperm surface during capacitation and ovaluation by an elevation of oviductal fluid pH is unmasking other surface components and allows sperm to penetrate the cumulus matrix and bind to the zona pellucida of the oocyte. In vitro has antimicrobial activity and may inhibit LPS-mediated inflammation. This chain is Beta-defensin 126 (DEFB126), found in Pan troglodytes (Chimpanzee).